The chain runs to 177 residues: ATP-dependent protease subunit HslV (177 aa).

Residue T2 is part of the active site. The Na(+) site is built by G157, C160, and T163.

This sequence belongs to the peptidase T1B family. HslV subfamily. A double ring-shaped homohexamer of HslV is capped on each side by a ring-shaped HslU homohexamer. The assembly of the HslU/HslV complex is dependent on binding of ATP.

It is found in the cytoplasm. It carries out the reaction ATP-dependent cleavage of peptide bonds with broad specificity.. Allosterically activated by HslU binding. Protease subunit of a proteasome-like degradation complex believed to be a general protein degrading machinery. This Aeromonas hydrophila subsp. hydrophila (strain ATCC 7966 / DSM 30187 / BCRC 13018 / CCUG 14551 / JCM 1027 / KCTC 2358 / NCIMB 9240 / NCTC 8049) protein is ATP-dependent protease subunit HslV.